Reading from the N-terminus, the 67-residue chain is MPADRLTTLEIRAAEQERTIEELSGQIAEQWTVIERMQRKLDALTDRFLALEEQAAPDVPVTKPPHW.

It belongs to the SlyX family.

This is Protein SlyX homolog from Mesorhizobium japonicum (strain LMG 29417 / CECT 9101 / MAFF 303099) (Mesorhizobium loti (strain MAFF 303099)).